A 60-amino-acid chain; its full sequence is Hemocyte defensin Cg-Defh1 (60 aa).

A signal peptide spans 1 to 17 (LFTLVVLLMVSADMAFA). Beta-D-GlcNAc-(1-&gt;4)-Mur2Ac(oyl-L-Ala-gamma-D-Glu-L-Lys-D-Ala-D-Ala)-di-trans,octa-cis-undecaprenyl diphosphate-binding residues include F19, G20, and C21. 4 cysteine pairs are disulfide-bonded: C21-C42, C28-C51, C32-C53, and C37-C56. Residues 22-25 (PRDQ) form a binds to membrane interface region. H31 provides a ligand contact to beta-D-GlcNAc-(1-&gt;4)-Mur2Ac(oyl-L-Ala-gamma-D-Glu-L-Lys-D-Ala-D-Ala)-di-trans,octa-cis-undecaprenyl diphosphate. Positions 43-49 (DAVTLWL) are binds to membrane interface. C51 contributes to the beta-D-GlcNAc-(1-&gt;4)-Mur2Ac(oyl-L-Ala-gamma-D-Glu-L-Lys-D-Ala-D-Ala)-di-trans,octa-cis-undecaprenyl diphosphate binding site.

Belongs to the invertebrate defensin family. As to expression, expressed in hemocytes.

It is found in the secreted. Its subcellular location is the target cell membrane. Antibacterial peptide mostly active against Gram-positive bacteria. It acts by selectively inhibiting peptidoglycan biosynthesis through complex formation with the cell wall precursor lipid II (1:1 molar ratio) thus inhibiting cell wall synthesis. It does not disrupt cell membranes. Is noticeably less potent than Cg-Defh2 and Cg-Defm. Shows no or limited activities against Gram-negative bacteria. In Magallana gigas (Pacific oyster), this protein is Hemocyte defensin Cg-Defh1.